We begin with the raw amino-acid sequence, 496 residues long: Glycylpeptide N-tetradecanoyltransferase 1 (496 aa).

The interval 1-82 (MADESETAVK…SAQDQPVKMN (82 aa)) is disordered. 2 positions are modified to phosphoserine: S31 and S47. Over residues 55–66 (KKKKKKQKKKKE) the composition is skewed to basic residues. S83 is subject to Phosphoserine. Tetradecanoyl-CoA contacts are provided by Q118, F119, W120, F247, L248, C249, V250, S256, R258, V259, and A260.

It belongs to the NMT family. In terms of tissue distribution, heart, gut, kidney, liver and placenta.

It localises to the cytoplasm. Its subcellular location is the cytosol. The protein resides in the membrane. It catalyses the reaction N-terminal glycyl-[protein] + tetradecanoyl-CoA = N-tetradecanoylglycyl-[protein] + CoA + H(+). It carries out the reaction N-terminal glycyl-L-lysyl-[protein] + tetradecanoyl-CoA = N-terminal glycyl-(N(6)-tetradecanoyl)-L-lysyl-[protein] + CoA + H(+). In terms of biological role, adds a myristoyl group to the N-terminal glycine residue of certain cellular and viral proteins. Also able to mediate N-terminal lysine myristoylation of proteins: catalyzes myristoylation of ARF6 on both 'Gly-2' and 'Lys-3'. Lysine myristoylation is required to maintain ARF6 on membranes during the GTPase cycle. The sequence is that of Glycylpeptide N-tetradecanoyltransferase 1 from Homo sapiens (Human).